A 359-amino-acid polypeptide reads, in one-letter code: DNA replication and repair protein RecF (359 aa).

30–37 contributes to the ATP binding site; sequence GPNGSGKT.

This sequence belongs to the RecF family.

Its subcellular location is the cytoplasm. In terms of biological role, the RecF protein is involved in DNA metabolism; it is required for DNA replication and normal SOS inducibility. RecF binds preferentially to single-stranded, linear DNA. It also seems to bind ATP. The polypeptide is DNA replication and repair protein RecF (Aliivibrio fischeri (strain ATCC 700601 / ES114) (Vibrio fischeri)).